Reading from the N-terminus, the 1600-residue chain is Eukaryotic translation initiation factor 4 gamma 1 (1600 aa).

The tract at residues 1–88 is disordered; it reads MNKAPQPTGP…ARPGPAPHVY (88 aa). Over residues 7 to 24 the composition is skewed to pro residues; that stretch reads PTGPPPARSPGLPQPAFP. Ser-15 bears the Phosphoserine mark. Residues 34 to 48 show a composition bias toward polar residues; the sequence is STPQATQMNTPSQPR. Residues 60 to 79 show a composition bias toward low complexity; the sequence is PSRAQPPSSAASRVQSAAPA. Residues Arg-80 and Arg-117 each carry the omega-N-methylarginine modification. Disordered stretches follow at residues 173 to 230, 243 to 326, 366 to 501, 507 to 526, and 541 to 606; these read NQPP…NGES, SQGA…LSPE, ETHE…QLSQ, AATQ…KELN, and VDPA…DQWK. The interval 179-207 is PABPC1-binding; sequence APKRERKTIRIRDPNQGGKDITEEIMSGA. Over residues 208 to 220 the composition is skewed to polar residues; the sequence is RTASTPTPPQTGG. The residue at position 214 (Thr-214) is a Phosphothreonine. Ser-230 carries the post-translational modification Phosphoserine. Residues 269–280 show a composition bias toward pro residues; it reads SPSPTPSPPPIL. Phosphoserine is present on Ser-324. Positions 438-449 are enriched in low complexity; it reads KVSSAALASILS. Positions 463-479 are enriched in acidic residues; that stretch reads QEEEMEEDDDDEEGGEA. Over residues 551-562 the composition is skewed to polar residues; the sequence is QPPTGSNPSPES. 2 stretches are compositionally biased toward basic and acidic residues: residues 578-587 and 596-606; these read WDSKEDKIHN and QKYEYKSDQWK. Residue Lys-606 is modified to N6-acetyllysine. The interval 611-622 is EIF4E-binding; sequence EEKKRYDREFLL. Residue Thr-651 is modified to Phosphothreonine. Disordered regions lie at residues 667–719 and 734–760; these read GPDF…TRKI and AEKA…DGSK. Positions 686–1089 are eIF3/EIF4A-binding; the sequence is GPPRGGPGGE…GSIDSNNQLF (404 aa). Omega-N-methylarginine is present on residues Arg-689 and Arg-698. A compositionally biased stretch (low complexity) spans 697-707; the sequence is PRGPAGLGPRR. The span at 745–760 shows a compositional bias: basic and acidic residues; the sequence is TAADKDRGEEDADGSK. One can recognise an MIF4G domain in the interval 765–993; sequence FRRVRSILNK…QDVLDLRQSN (229 aa). Disordered regions lie at residues 1029–1117 and 1129–1238; these read AKGS…SEAT and QQTL…AALS. Phosphoserine is present on Ser-1032. An omega-N-methylarginine mark is found at Arg-1036 and Arg-1046. A phosphoserine mark is found at Ser-1081 and Ser-1096. The residue at position 1099 (Lys-1099) is an N6-acetyllysine. Residues Ser-1147 and Ser-1149 each carry the phosphoserine modification. Basic and acidic residues predominate over residues 1148–1180; it reads LSRERGEKAGDRGDRLERSERGGDRGDRLDRAR. Phosphoserine; by PKC/PRKCA is present on Ser-1187. Residues 1188–1225 show a composition bias toward basic and acidic residues; the sequence is FSKEVEERSRERPSQPEGLRKAASLTEDRGRDPVKREA. Residues Ser-1189, Ser-1196, and Ser-1211 each carry the phosphoserine modification. Thr-1213 carries the phosphothreonine modification. 2 positions are modified to phosphoserine: Ser-1231 and Ser-1238. The 123-residue stretch at 1241–1363 folds into the MI domain; sequence EVEKKSKAII…PMGELFREIT (123 aa). The 171-residue stretch at 1429-1599 folds into the W2 domain; the sequence is ESEAPGQRTL…REAEDEESDH (171 aa). The interval 1450–1600 is EIF4A-binding; that stretch reads LLKDGGSNQR…EAEDEESDHN (151 aa). The segment at 1585–1600 is necessary but not sufficient for MKNK1-binding; that stretch reads FFNWLREAEDEESDHN. Phosphoserine is present on Ser-1597.

It belongs to the eukaryotic initiation factor 4G family. As to quaternary structure, eIF4F is a multi-subunit complex, the composition of which varies with external and internal environmental conditions. It is composed of at least EIF4A, EIF4E (cap-binding) and EIF4G1/EIF4G3. Interacts with eIF3 complex, mutually exclusive with EIF4A1 or EIF4A2, EIF4E and through its N-terminus with PABPC1. Interacts with EIF4E or with EIF1 (mutually exclusive) through a common binding site. Interacts through its C-terminus with the serine/threonine kinases MKNK1, and with MKNK2. Appears to act as a scaffold protein, holding these enzymes in place to phosphorylate EIF4E. Non-phosphorylated EIF4EBP1 competes with EIF4G1/EIF4G3 to interact with EIF4E; insulin stimulated MAP-kinase (MAPK1 and MAPK3) phosphorylation of EIF4EBP1 causes dissociation of the complex allowing EIF4G1/EIF4G3 to bind and consequent initiation of translation. EIF4G1/EIF4G3 interacts with PABPC1 to bring about circularization of the mRNA. Interacts with EIF4E3. Interacts with CIRBP and MIF4GD. Interacts with RBM4. Interacts with HNRNPD/AUF1; the interaction requires RNA. Interacts with DDX3X; the interaction requires RNA. Interacts with DAZAP2. In terms of assembly, (Microbial infection) Interacts with murine norovirus viral genome-linked protein (via C-terminus); this interaction plays a role in translation of viral proteins. Post-translationally, phosphorylated at multiple sites in vivo. Phosphorylation at Ser-1187 by PRKCA induces binding to MKNK1.

The protein localises to the cytoplasm. It localises to the nucleus. The protein resides in the stress granule. In terms of biological role, component of the protein complex eIF4F, which is involved in the recognition of the mRNA cap, ATP-dependent unwinding of 5'-terminal secondary structure and recruitment of mRNA to the ribosome. Exists in two complexes, either with EIF1 or with EIF4E (mutually exclusive). Together with EIF1, is required for leaky scanning, in particular for avoiding cap-proximal start codon. Together with EIF4E, antagonizes the scanning promoted by EIF1-EIF4G1 and locates the start codon (through a TISU element) without scanning. As a member of the eIF4F complex, required for endoplasmic reticulum stress-induced ATF4 mRNA translation. The polypeptide is Eukaryotic translation initiation factor 4 gamma 1 (Eif4g1) (Mus musculus (Mouse)).